A 427-amino-acid polypeptide reads, in one-letter code: N-formyl-4-amino-5-aminomethyl-2-methylpyrimidine deformylase (427 aa).

Residue His91 coordinates Zn(2+). The active site involves Asp93. A Zn(2+)-binding site is contributed by Asp124. Residue Glu158 is the Proton acceptor of the active site. The Zn(2+) site is built by Glu159, Asp182, and His396.

It belongs to the peptidase M20A family. It depends on Zn(2+) as a cofactor. Co(2+) serves as cofactor.

It carries out the reaction N-formyl-4-amino-5-aminomethyl-2-methylpyrimidine + H2O = 4-amino-5-aminomethyl-2-methylpyrimidine + formate. It functions in the pathway cofactor biosynthesis; thiamine diphosphate biosynthesis. Functionally, catalyzes the deformylation of the formylaminopyrimidine N-formyl-4-amino-5-aminomethyl-2-methylpyrimidine (FAMP) to give the corresponding aminopyrimidine. This Halalkalibacterium halodurans (strain ATCC BAA-125 / DSM 18197 / FERM 7344 / JCM 9153 / C-125) (Bacillus halodurans) protein is N-formyl-4-amino-5-aminomethyl-2-methylpyrimidine deformylase.